The primary structure comprises 444 residues: MNAVQIDQLKQQFPLIETLQAYQETFWFNPHRYPLNEALAKVCLTEQDVKEAEARLARFAPYLAKVFPETQAQHGKIESALVEIAEMQQALSLQKHKTLTGKLWLKKDSHLPISGSIKARGGIYEVLAHAEKLAIEAGLLKLEDDYSKLDQDSFRTFFSKYQIAVGSTGNLGLSIGIMSAKLGFRVSVHMSADARQWKKDKLRSLGVNVVEYASDYGVAVEEGRKAAEQDPFCFFIDDENSTTLFLGYAVAGLRLKQQFEQKQIKVDADHPLFVYLPCGVGGGPGGVSFGLKLAFGEHVHCIFAEPTHSPCMLLGVYTGLHDQISVNDIGLDNITAADGLAVGRASGFVGRAMQQLIDGYYTIHDECLYELIALLNQTENIQVEPSAAAGMMGPYYVQTTPDYLALHQLSAEKLQHATHVVWATGGGMVPPDEMQKYLTYSQRN.

K118 carries the post-translational modification N6-(pyridoxal phosphate)lysine.

Belongs to the serine/threonine dehydratase family. DsdA subfamily. The cofactor is pyridoxal 5'-phosphate.

The enzyme catalyses D-serine = pyruvate + NH4(+). The chain is Probable D-serine dehydratase from Acinetobacter baumannii (strain ACICU).